Reading from the N-terminus, the 366-residue chain is BIIDXI-like protein At5g11420 (366 aa).

The signal sequence occupies residues Met1–Cys22. N-linked (GlcNAc...) asparagine glycans are attached at residues Asn98, Asn122, and Asn209.

In terms of assembly, interacts with PME3.

It is found in the secreted. The protein localises to the cell wall. Together with BIIDXI, acts as a positive regulator of PME3 activity during several developmental processes, including seed germination and endosperm (testa) rupture at the micropyle, probably by modulating the pectin status in cell walls. In Arabidopsis thaliana (Mouse-ear cress), this protein is BIIDXI-like protein At5g11420.